The sequence spans 497 residues: Serine hydroxymethyltransferase (497 aa).

(6S)-5,6,7,8-tetrahydrofolate contacts are provided by residues Leu-176 and 180–182 (GHL). An N6-(pyridoxal phosphate)lysine modification is found at Lys-289.

This sequence belongs to the SHMT family. As to quaternary structure, homodimer. Requires pyridoxal 5'-phosphate as cofactor.

It localises to the cytoplasm. The enzyme catalyses (6R)-5,10-methylene-5,6,7,8-tetrahydrofolate + glycine + H2O = (6S)-5,6,7,8-tetrahydrofolate + L-serine. It functions in the pathway one-carbon metabolism; tetrahydrofolate interconversion. Its pathway is amino-acid biosynthesis; glycine biosynthesis; glycine from L-serine: step 1/1. Functionally, catalyzes the reversible interconversion of serine and glycine with tetrahydrofolate (THF) serving as the one-carbon carrier. This reaction serves as the major source of one-carbon groups required for the biosynthesis of purines, thymidylate, methionine, and other important biomolecules. Also exhibits THF-independent aldolase activity toward beta-hydroxyamino acids, producing glycine and aldehydes, via a retro-aldol mechanism. In Chlamydia trachomatis serovar A (strain ATCC VR-571B / DSM 19440 / HAR-13), this protein is Serine hydroxymethyltransferase.